We begin with the raw amino-acid sequence, 200 residues long: dITP/XTP pyrophosphatase (200 aa).

8–13 (TGNQGK) contributes to the substrate binding site. The active-site Proton acceptor is D69. Residue D69 coordinates Mg(2+). Substrate is bound by residues S70, 154–157 (FGYD), K177, and 182–183 (HR).

Belongs to the HAM1 NTPase family. As to quaternary structure, homodimer. Requires Mg(2+) as cofactor.

The enzyme catalyses XTP + H2O = XMP + diphosphate + H(+). The catalysed reaction is dITP + H2O = dIMP + diphosphate + H(+). It carries out the reaction ITP + H2O = IMP + diphosphate + H(+). In terms of biological role, pyrophosphatase that catalyzes the hydrolysis of nucleoside triphosphates to their monophosphate derivatives, with a high preference for the non-canonical purine nucleotides XTP (xanthosine triphosphate), dITP (deoxyinosine triphosphate) and ITP. Seems to function as a house-cleaning enzyme that removes non-canonical purine nucleotides from the nucleotide pool, thus preventing their incorporation into DNA/RNA and avoiding chromosomal lesions. The sequence is that of dITP/XTP pyrophosphatase from Vibrio cholerae serotype O1 (strain ATCC 39315 / El Tor Inaba N16961).